The primary structure comprises 379 residues: Programmed cell death protein 2-like (379 aa).

This Gallus gallus (Chicken) protein is Programmed cell death protein 2-like (PDCD2L).